The following is a 74-amino-acid chain: U4-theraphotoxin-Cg1a (74 aa).

The first 19 residues, 1–19, serve as a signal peptide directing secretion; the sequence is MNATIFAFLLLLNLAMHNA. Positions 20–39 are excised as a propeptide; sequence TEQSSETDMDDTLLIPEINR. Cystine bridges form between Cys-42–Cys-56, Cys-49–Cys-61, and Cys-55–Cys-71.

This sequence belongs to the neurotoxin 36 family. 01 subfamily. In terms of tissue distribution, expressed by the venom gland.

The protein localises to the secreted. Probable ion channel inhibitor. This is U4-theraphotoxin-Cg1a from Chilobrachys guangxiensis (Chinese earth tiger tarantula).